The following is a 260-amino-acid chain: Indole-3-glycerol phosphate synthase (260 aa).

This sequence belongs to the TrpC family.

The catalysed reaction is 1-(2-carboxyphenylamino)-1-deoxy-D-ribulose 5-phosphate + H(+) = (1S,2R)-1-C-(indol-3-yl)glycerol 3-phosphate + CO2 + H2O. It participates in amino-acid biosynthesis; L-tryptophan biosynthesis; L-tryptophan from chorismate: step 4/5. The polypeptide is Indole-3-glycerol phosphate synthase (Thermoanaerobacter pseudethanolicus (strain ATCC 33223 / 39E) (Clostridium thermohydrosulfuricum)).